Reading from the N-terminus, the 184-residue chain is Cytidylate kinase (184 aa).

Residue 8-16 (GQPGSGKTT) participates in ATP binding.

The protein belongs to the cytidylate kinase family. Type 2 subfamily.

The protein resides in the cytoplasm. The enzyme catalyses CMP + ATP = CDP + ADP. It catalyses the reaction dCMP + ATP = dCDP + ADP. The protein is Cytidylate kinase of Pyrobaculum calidifontis (strain DSM 21063 / JCM 11548 / VA1).